Consider the following 349-residue polypeptide: Nicotinate-nucleotide--dimethylbenzimidazole phosphoribosyltransferase (349 aa).

Glu315 functions as the Proton acceptor in the catalytic mechanism.

This sequence belongs to the CobT family.

It carries out the reaction 5,6-dimethylbenzimidazole + nicotinate beta-D-ribonucleotide = alpha-ribazole 5'-phosphate + nicotinate + H(+). The protein operates within nucleoside biosynthesis; alpha-ribazole biosynthesis; alpha-ribazole from 5,6-dimethylbenzimidazole: step 1/2. In terms of biological role, catalyzes the synthesis of alpha-ribazole-5'-phosphate from nicotinate mononucleotide (NAMN) and 5,6-dimethylbenzimidazole (DMB). The protein is Nicotinate-nucleotide--dimethylbenzimidazole phosphoribosyltransferase of Variovorax paradoxus (strain S110).